The following is a 253-amino-acid chain: Beta-crystallin B1 (253 aa).

A compositionally biased stretch (low complexity) spans 1-18 (MSQPAAKASATAAVNPGP). Residues 1-53 (MSQPAAKASATAAVNPGPDGKGKAGPPPGPAPGSGPAPAPAPAPAQPAPAAKA) are disordered. Ser-2 is modified (N-acetylserine). Residues 2–59 (SQPAAKASATAAVNPGPDGKGKAGPPPGPAPGSGPAPAPAPAPAQPAPAAKAELPPGS) are N-terminal arm. The span at 25 to 47 (GPPPGPAPGSGPAPAPAPAPAQP) shows a compositional bias: pro residues. 2 Beta/gamma crystallin 'Greek key' domains span residues 60–99 (YKLV…IVTS) and 100–144 (GPWV…RPIK). Residues 145–149 (MDAQE) form a connecting peptide region. Beta/gamma crystallin 'Greek key' domains are found at residues 150–191 (HKLC…RVSS) and 192–234 (GTWV…RRLR). The tract at residues 236-253 (RQWHREGCFPVLAAEPPK) is C-terminal arm.

It belongs to the beta/gamma-crystallin family. In terms of assembly, homo/heterodimer, or complexes of higher-order. The structure of beta-crystallin oligomers seems to be stabilized through interactions between the N-terminal arms. Post-translationally, specific cleavages in the N-terminal arm occur during lens maturation and give rise to truncated forms, leading to impaired oligomerization and protein insolubilization.

Its function is as follows. Crystallins are the dominant structural components of the vertebrate eye lens. The chain is Beta-crystallin B1 (CRYBB1) from Bos taurus (Bovine).